A 232-amino-acid polypeptide reads, in one-letter code: Ion-translocating oxidoreductase complex subunit E (232 aa).

Helical transmembrane passes span 18 to 38 (GLVQ…LTNA), 39 to 59 (LGLG…VSLV), 69 to 89 (IPVF…VINA), 93 to 113 (GLYL…VIIG), 128 to 148 (AFDG…LGAV), and 182 to 202 (SFLL…LIAG).

It belongs to the NqrDE/RnfAE family. The complex is composed of six subunits: RnfA, RnfB, RnfC, RnfD, RnfE and RnfG.

Its subcellular location is the cell inner membrane. Functionally, part of a membrane-bound complex that couples electron transfer with translocation of ions across the membrane. In Shewanella amazonensis (strain ATCC BAA-1098 / SB2B), this protein is Ion-translocating oxidoreductase complex subunit E.